A 180-amino-acid polypeptide reads, in one-letter code: MPLLNSVTTPYAEALLQVVNENSQTEEMVSEVKQLLELINNSPELEKALSSPILETDAKKKIINEIFSKKVNSSLLNFLKLLADRQRIGILTSILDRFLEIYRENSNIALATVTSAVELTDEQKGLITKKIINIAGTEKLELVTKIDPSLIGGFVASVGSKVIDASLASQIRKLGLSLSK.

This sequence belongs to the ATPase delta chain family. In terms of assembly, F-type ATPases have 2 components, F(1) - the catalytic core - and F(0) - the membrane proton channel. F(1) has five subunits: alpha(3), beta(3), gamma(1), delta(1), epsilon(1). CF(0) has four main subunits: a(1), b(1), b'(1) and c(10-14). The alpha and beta chains form an alternating ring which encloses part of the gamma chain. F(1) is attached to F(0) by a central stalk formed by the gamma and epsilon chains, while a peripheral stalk is formed by the delta, b and b' chains.

Its subcellular location is the cellular thylakoid membrane. In terms of biological role, f(1)F(0) ATP synthase produces ATP from ADP in the presence of a proton or sodium gradient. F-type ATPases consist of two structural domains, F(1) containing the extramembraneous catalytic core and F(0) containing the membrane proton channel, linked together by a central stalk and a peripheral stalk. During catalysis, ATP synthesis in the catalytic domain of F(1) is coupled via a rotary mechanism of the central stalk subunits to proton translocation. This protein is part of the stalk that links CF(0) to CF(1). It either transmits conformational changes from CF(0) to CF(1) or is implicated in proton conduction. The chain is ATP synthase subunit delta from Prochlorococcus marinus (strain MIT 9301).